Here is a 294-residue protein sequence, read N- to C-terminus: MAIAEEPAQAPVIQRIALVIQYLGQGFCGWQRQPRQRSVQGELESAIAAVVGHPVSVQSAGRTDTGVHAAAQVAHFETTSPIPAHRWPSVLNGRLTPDLNIRAAAIVPANWHARFSASYRRYRYTIYTDPCPNLFLNSYVWHYYQAPLCENQMQAALQTLVGYHHLAAFQRSGSKRQHAWVHVQDAWVRRRDSLIEIEVQASGFLYGMIRLLVGLLVQVGEGSRSLESFTDIWVNQRRDRVRHAAPPQGLCLLRIGYPDSPFPVDAWFDTQPLFVLPSSRNDSESLSPCAVSLG.

The active-site Nucleophile is the D64. A substrate-binding site is contributed by Y122.

It belongs to the tRNA pseudouridine synthase TruA family. Homodimer.

The enzyme catalyses uridine(38/39/40) in tRNA = pseudouridine(38/39/40) in tRNA. Functionally, formation of pseudouridine at positions 38, 39 and 40 in the anticodon stem and loop of transfer RNAs. The protein is tRNA pseudouridine synthase A of Synechococcus sp. (strain ATCC 27144 / PCC 6301 / SAUG 1402/1) (Anacystis nidulans).